The chain runs to 80 residues: UPF0291 protein llmg_1475 (80 aa).

The protein belongs to the UPF0291 family.

Its subcellular location is the cytoplasm. The protein is UPF0291 protein llmg_1475 of Lactococcus lactis subsp. cremoris (strain MG1363).